We begin with the raw amino-acid sequence, 331 residues long: Phosphoenolpyruvate transferase (331 aa).

Asp-63 contacts 7,8-didemethyl-8-hydroxy-5-deazariboflavin.

This sequence belongs to the CofD family. In terms of assembly, homodimer. It depends on Mg(2+) as a cofactor.

The enzyme catalyses enolpyruvoyl-2-diphospho-5'-guanosine + 7,8-didemethyl-8-hydroxy-5-deazariboflavin = dehydro coenzyme F420-0 + GMP + H(+). It functions in the pathway cofactor biosynthesis; coenzyme F420 biosynthesis. Catalyzes the transfer of the phosphoenolpyruvate moiety from enoylpyruvoyl-2-diphospho-5'-guanosine (EPPG) to 7,8-didemethyl-8-hydroxy-5-deazariboflavin (FO) with the formation of dehydro coenzyme F420-0 and GMP. This is Phosphoenolpyruvate transferase from Mycobacterium bovis (strain ATCC BAA-935 / AF2122/97).